The following is a 181-amino-acid chain: Probable calcium-binding protein CML43 (181 aa).

EF-hand domains are found at residues 24-59, 107-142, and 145-180; these read LNAL…LGLD, SPES…LGLP, and GEIE…VVVP. Asp-37, Asn-39, Asp-41, Glu-48, Asp-120, Asp-122, Asp-124, Glu-131, Asp-158, Asn-160, Asp-162, Arg-164, and Glu-169 together coordinate Ca(2+).

Expressed specifically in roots.

In terms of biological role, calcium-binding protein that may mediate calcium-dependent signal during plant defense response. This is Probable calcium-binding protein CML43 (CML43) from Arabidopsis thaliana (Mouse-ear cress).